A 293-amino-acid chain; its full sequence is Ethanolamine ammonia-lyase small subunit (293 aa).

The adenosylcob(III)alamin site is built by V207 and E228.

It belongs to the EutC family. The basic unit is a heterodimer which dimerizes to form tetramers. The heterotetramers trimerize; 6 large subunits form a core ring with 6 small subunits projecting outwards. Adenosylcob(III)alamin is required as a cofactor.

It localises to the bacterial microcompartment. It catalyses the reaction ethanolamine = acetaldehyde + NH4(+). Its pathway is amine and polyamine degradation; ethanolamine degradation. Its function is as follows. Catalyzes the deamination of various vicinal amino-alcohols to oxo compounds. Allows this organism to utilize ethanolamine as the sole source of nitrogen and carbon in the presence of external vitamin B12. This Listeria innocua serovar 6a (strain ATCC BAA-680 / CLIP 11262) protein is Ethanolamine ammonia-lyase small subunit.